We begin with the raw amino-acid sequence, 430 residues long: Adenylosuccinate synthetase (430 aa).

Residues 12–18 and 40–42 each bind GTP; these read GDEGKGK and GHT. Asp-13 serves as the catalytic Proton acceptor. Mg(2+)-binding residues include Asp-13 and Gly-40. IMP-binding positions include 13–16, 38–41, Thr-130, Arg-144, Gln-224, Thr-239, and Arg-303; these read DEGK and NAGH. His-41 serves as the catalytic Proton donor. 299 to 305 is a binding site for substrate; that stretch reads VNTGRKR. Residues Arg-305, 331–333, and 413–415 each bind GTP; these read KLD and STS.

The protein belongs to the adenylosuccinate synthetase family. In terms of assembly, homodimer. Mg(2+) serves as cofactor.

Its subcellular location is the cytoplasm. The catalysed reaction is IMP + L-aspartate + GTP = N(6)-(1,2-dicarboxyethyl)-AMP + GDP + phosphate + 2 H(+). It participates in purine metabolism; AMP biosynthesis via de novo pathway; AMP from IMP: step 1/2. Functionally, plays an important role in the de novo pathway of purine nucleotide biosynthesis. Catalyzes the first committed step in the biosynthesis of AMP from IMP. This chain is Adenylosuccinate synthetase, found in Rhodopseudomonas palustris (strain TIE-1).